A 163-amino-acid polypeptide reads, in one-letter code: Shikimate kinase (163 aa).

10-15 (GVGKTT) is an ATP binding site. Thr14 lines the Mg(2+) pocket. The substrate site is built by Asp28, Arg52, and Gly75. Residue Arg116 coordinates ATP. Arg134 is a binding site for substrate. Arg151 provides a ligand contact to ATP.

The protein belongs to the shikimate kinase family. As to quaternary structure, monomer. Mg(2+) serves as cofactor.

It localises to the cytoplasm. It catalyses the reaction shikimate + ATP = 3-phosphoshikimate + ADP + H(+). It participates in metabolic intermediate biosynthesis; chorismate biosynthesis; chorismate from D-erythrose 4-phosphate and phosphoenolpyruvate: step 5/7. Its function is as follows. Catalyzes the specific phosphorylation of the 3-hydroxyl group of shikimic acid using ATP as a cosubstrate. The sequence is that of Shikimate kinase from Streptococcus pyogenes serotype M49 (strain NZ131).